The chain runs to 716 residues: DNA ligase (716 aa).

NAD(+)-binding positions include 42–46 (DAEYD), 91–92 (SL), and Glu-125. The active-site N6-AMP-lysine intermediate is the Lys-127. The NAD(+) site is built by Arg-148, Glu-184, Lys-300, and Lys-324. 4 residues coordinate Zn(2+): Cys-429, Cys-432, Cys-447, and Cys-453. The 79-residue stretch at 638–716 (TASSPIAGKI…EEAWLQLIEG (79 aa)) folds into the BRCT domain.

The protein belongs to the NAD-dependent DNA ligase family. LigA subfamily. The cofactor is Mg(2+). It depends on Mn(2+) as a cofactor.

It carries out the reaction NAD(+) + (deoxyribonucleotide)n-3'-hydroxyl + 5'-phospho-(deoxyribonucleotide)m = (deoxyribonucleotide)n+m + AMP + beta-nicotinamide D-nucleotide.. In terms of biological role, DNA ligase that catalyzes the formation of phosphodiester linkages between 5'-phosphoryl and 3'-hydroxyl groups in double-stranded DNA using NAD as a coenzyme and as the energy source for the reaction. It is essential for DNA replication and repair of damaged DNA. This chain is DNA ligase, found in Bartonella henselae (strain ATCC 49882 / DSM 28221 / CCUG 30454 / Houston 1) (Rochalimaea henselae).